The chain runs to 555 residues: MEEMPERIEIKQKFPSWREMLKPVKEFEEGRLSYLSLPKQVDSEWFKMPFGDVERDFHDLKLPENWKEIFLEAMKDTLEKNRSFKLFMDICVRCGACADKCHYYIGTGDPKNMPVARAELIRSVYRRYFTPAGKFFGEWAGARELNEDVLKELYYYAYQCSLCRRCSLFCPYGIDTAEIVWWLRRMLSRVGLNQRFMTISIEASSRTGNHLGLLPGGMYGAIQQGLEELKDYTGFDLHTYINKKGADILFVAPSADYFATPHWYVMLGYLLLFNELEEKYGLTITWSTYASEGGNFGTFHSYEAAQLLNSKIYKEAERLGVSFIIGGECGHMWRDKHQFINTMNLPPKHEEWRRFWEDPDLGNLAEGLRGVRFDSYASGEHGWIHILEFVAALIEHKKIVVDKSRNDKWIATYHDPCNVARGMGLIEEPRYVLRNVMNNFYDMPEHTIKDKTYCCGAGGGMLADELMDLRMRGVMPRMMAVRHVYRKYGVNILLTPCAIDKAQFPHALEYWKIPIEVGGPMEMVGNALVMTAFGEKPEDRQFDLRGEPLKPEEGE.

2 4Fe-4S ferredoxin-type domains span residues 82 to 111 (RSFKLFMDICVRCGACADKCHYYIGTGDPK) and 151 to 180 (KELYYYAYQCSLCRRCSLFCPYGIDTAEIV). C91, C94, C97, C101, C160, C163, C166, and C170 together coordinate [4Fe-4S] cluster.

In terms of assembly, consists of five subunits: an integral membrane subunit, a cytochrome b-like subunit, a cytochrome c subunit and two iron-sulfur subunits. [4Fe-4S] cluster is required as a cofactor.

It is found in the cell membrane. Its function is as follows. Has menaquinol-oxidizing activity. HmeC and HmeD subunits may together mediate electron transfer from menaquinol to an unidentified electron acceptor on the cytoplasmic side of the membrane. The chain is Hdr-like menaquinol oxidoreductase iron-sulfur subunit 2 (hmeD) from Archaeoglobus fulgidus (strain ATCC 49558 / DSM 4304 / JCM 9628 / NBRC 100126 / VC-16).